A 141-amino-acid polypeptide reads, in one-letter code: uncharacterized protein (141 aa).

This is an uncharacterized protein from Clostridium pasteurianum.